Consider the following 328-residue polypeptide: GMP reductase (328 aa).

The Thioimidate intermediate role is filled by Cys-176. Position 205-228 (205-228) interacts with NADP(+); that stretch reads IIADGGIRTHGDIAKSIRFGASMI.

Belongs to the IMPDH/GMPR family. GuaC type 2 subfamily.

The enzyme catalyses IMP + NH4(+) + NADP(+) = GMP + NADPH + 2 H(+). In terms of biological role, catalyzes the irreversible NADPH-dependent deamination of GMP to IMP. It functions in the conversion of nucleobase, nucleoside and nucleotide derivatives of G to A nucleotides, and in maintaining the intracellular balance of A and G nucleotides. This Streptococcus pneumoniae (strain ATCC 700669 / Spain 23F-1) protein is GMP reductase.